The following is a 243-amino-acid chain: 1-(5-phosphoribosyl)-5-[(5-phosphoribosylamino)methylideneamino] imidazole-4-carboxamide isomerase (243 aa).

Residue D8 is the Proton acceptor of the active site. Catalysis depends on D130, which acts as the Proton donor.

It belongs to the HisA/HisF family.

It is found in the cytoplasm. The catalysed reaction is 1-(5-phospho-beta-D-ribosyl)-5-[(5-phospho-beta-D-ribosylamino)methylideneamino]imidazole-4-carboxamide = 5-[(5-phospho-1-deoxy-D-ribulos-1-ylimino)methylamino]-1-(5-phospho-beta-D-ribosyl)imidazole-4-carboxamide. The protein operates within amino-acid biosynthesis; L-histidine biosynthesis; L-histidine from 5-phospho-alpha-D-ribose 1-diphosphate: step 4/9. This Methylococcus capsulatus (strain ATCC 33009 / NCIMB 11132 / Bath) protein is 1-(5-phosphoribosyl)-5-[(5-phosphoribosylamino)methylideneamino] imidazole-4-carboxamide isomerase.